We begin with the raw amino-acid sequence, 132 residues long: MADFVGSWKYGDSENMEAYLKKLGISSDMVDKILNAKPEFTFTLEGNQMTIKMVSSLKTKITTFTFGEEFKEETADGKTAMTTVTKDSESKMTQVTTGPEYTTHVVREVVGDKMIATWTVGDVKAVTTLLKA.

Ala2 bears the N-acetylalanine mark.

Belongs to the calycin superfamily. Fatty-acid binding protein (FABP) family.

In Fasciola gigantica (Giant liver fluke), this protein is Fatty acid-binding protein 1 (FABP-1).